Reading from the N-terminus, the 282-residue chain is Bis(5'-nucleosyl)-tetraphosphatase, symmetrical (282 aa).

The protein belongs to the Ap4A hydrolase family.

The enzyme catalyses P(1),P(4)-bis(5'-adenosyl) tetraphosphate + H2O = 2 ADP + 2 H(+). Functionally, hydrolyzes diadenosine 5',5'''-P1,P4-tetraphosphate to yield ADP. This Burkholderia pseudomallei (strain 668) protein is Bis(5'-nucleosyl)-tetraphosphatase, symmetrical.